The chain runs to 1081 residues: FHF complex subunit HOOK-interacting protein 1A (1081 aa).

Disordered stretches follow at residues 474–496, 544–623, 658–770, and 863–883; these read SEEQLLPETPCSPSSPSPPPPPA, PETF…DPPK, EKDT…ENEP, and EAGSSPFGVGEDTAFSSRHPV. Residues 486–496 are compositionally biased toward pro residues; sequence PSSPSPPPPPA. Residues 553–564 are compositionally biased toward basic and acidic residues; sequence EESRENSGHPEA. The segment covering 567–576 has biased composition (polar residues); sequence PQQSVRTSGQ. Acidic residues predominate over residues 680–707; it reads EPLEDTSEQQEDTSEQLEDTSELQEDTA. 2 stretches are compositionally biased toward polar residues: residues 727–738 and 746–762; these read EAQSLPTSNGPL and ESQPSRESSDLCQNTFS.

Belongs to the FHIP family. As to quaternary structure, may be a component of the FTS/Hook/FHIP complex (FHF complex), composed of AKTIP/FTS, FHIP1B, and one or more members of the Hook family of proteins HOOK1, HOOK2, and HOOK3. May interact directly with AKTIP/FTS.

Functionally, probable component of the FTS/Hook/FHIP complex (FHF complex). FHF complex promotes the distribution of AP-4 complex to the perinuclear area of the cell. This Mus musculus (Mouse) protein is FHF complex subunit HOOK-interacting protein 1A.